Consider the following 2183-residue polypeptide: DNA polymerase epsilon catalytic subunit A (2183 aa).

The Zn(2+) site is built by C2066, C2069, C2090, and C2093. The segment at 2066–2093 adopts a CysA-type zinc-finger fold; sequence CFKCKNPCDLDLCKDSCCTKSGFRCPLC. [4Fe-4S] cluster is bound by residues C2124, C2127, C2139, and C2141. Positions 2124 to 2141 match the CysB motif motif; the sequence is CDKCRRVKEYELTEFCPC.

Belongs to the DNA polymerase type-B family. In terms of assembly, heterotetramer. Consists of 4 subunits: POL2, DPB2, DPB3 and DPB4. [4Fe-4S] cluster is required as a cofactor.

It localises to the nucleus. The catalysed reaction is DNA(n) + a 2'-deoxyribonucleoside 5'-triphosphate = DNA(n+1) + diphosphate. Its function is as follows. DNA polymerase II participates in chromosomal DNA replication. The chain is DNA polymerase epsilon catalytic subunit A (POL2) from Yarrowia lipolytica (strain CLIB 122 / E 150) (Yeast).